A 551-amino-acid chain; its full sequence is Solute carrier family 22 member 3 (551 aa).

Residues 21-41 (VFLLLCLTGVTFAFLFVGVVF) form a helical membrane-spanning segment. Asparagine 72, asparagine 99, and asparagine 114 each carry an N-linked (GlcNAc...) asparagine glycan. The helical transmembrane segment at 177–197 (LIIYLISCFGVGITGVVVAFA) threads the bilayer. N-linked (GlcNAc...) asparagine glycosylation occurs at asparagine 199. Transmembrane regions (helical) follow at residues 236–256 (IVGI…PGIA) and 264–284 (GIQL…WVVP). Positions 284 to 288 (PESPR) match the Proline-rich sequence motif. A glycan (N-linked (GlcNAc...) asparagine) is linked at asparagine 317. 3 helical membrane-spanning segments follow: residues 376-396 (IDFF…LLTI), 464-484 (GVSL…FLLF), and 493-513 (LPLI…MLLP).

Belongs to the major facilitator (TC 2.A.1) superfamily. Organic cation transporter (TC 2.A.1.19) family. As to expression, highly expressed in placenta. Highly expressed in kidney cortex. In kidney, expressed specifically in the proximal and distal convoluted tubules and within Bowman capsule. Expressed in brain, particularly in dopaminergic neurons of the substantia nigra compacta, non-aminergic neurons of the ventral tegmental area, substantia nigra reticulata, locus coeruleus, hippocampus and cortex. In brain, also detected in astrocytes in the substantia nigra reticulata, several hypothalamic nuclei and nigrostriatal region. Expressed in neurons and glial cells of amygdala.

It localises to the cell membrane. The protein resides in the apical cell membrane. It is found in the basolateral cell membrane. Its subcellular location is the mitochondrion membrane. The protein localises to the endomembrane system. It localises to the nucleus membrane. The protein resides in the nucleus outer membrane. It carries out the reaction (R)-noradrenaline(out) = (R)-noradrenaline(in). It catalyses the reaction (R)-adrenaline(out) = (R)-adrenaline(in). The catalysed reaction is serotonin(out) = serotonin(in). The enzyme catalyses dopamine(out) = dopamine(in). It carries out the reaction histamine(out) = histamine(in). It catalyses the reaction tyramine(in) = tyramine(out). The catalysed reaction is guanidine(out) = guanidine(in). The enzyme catalyses agmatine(out) = agmatine(in). It carries out the reaction spermidine(in) = spermidine(out). It catalyses the reaction L-histidyl-L-proline diketopiperazine(in) = L-histidyl-L-proline diketopiperazine(out). The catalysed reaction is (R)-salsolinol(in) = (R)-salsolinol(out). Functionally, electrogenic voltage-dependent transporter that mediates the transport of a variety of organic cations such as endogenous bioactive amines, cationic drugs and xenobiotics. Cation cellular uptake or release is driven by the electrochemical potential, i.e. membrane potential and concentration gradient. Functions as a Na(+)- and Cl(-)-independent, bidirectional uniporter. Implicated in monoamine neurotransmitters uptake such as dopamine, adrenaline/epinephrine, noradrenaline/norepinephrine, homovanillic acid, histamine, serotonin and tyramine, thereby supporting a role in homeostatic regulation of aminergic neurotransmission in the brain. Transports dopaminergic neuromodulators cyclo(his-pro) and salsolinol with low efficiency. May be involved in the uptake and disposition of cationic compounds by renal clearance from the blood flow. May contribute to regulate the transport of cationic compounds in testis across the blood-testis-barrier. Mediates the transport of polyamine spermidine and putrescine. Mediates the bidirectional transport of polyamine agmatine. Also transports guanidine. May also mediate intracellular transport of organic cations, thereby playing a role in amine metabolism and intracellular signaling. This chain is Solute carrier family 22 member 3, found in Mus musculus (Mouse).